We begin with the raw amino-acid sequence, 423 residues long: T-box protein 2 (423 aa).

A DNA-binding region (T-box) is located at residues 70–243 (LWQQFSQCGT…NNPFAKGFRD (174 aa)). Disordered stretches follow at residues 238–324 (AKGF…PLRS) and 384–423 (VEATSEDSEEAEKPEVKKEQKSVTPPKKGGFDVLDLLSKP). The span at 261–283 (DATQSPPGKTASLPTHSPHPSES) shows a compositional bias: polar residues. Residues 302–317 (TPTTSSLSTSTTPTLS) show a composition bias toward low complexity. Residues 394–404 (AEKPEVKKEQK) show a composition bias toward basic and acidic residues.

In terms of processing, sumoylated. In terms of tissue distribution, expressed in body wall muscles and a subset of pharyngeal neurons. Expressed in head neurons and occassionally tail neurons. Not expressed in the pharynx.

The protein localises to the nucleus. In terms of biological role, involved in the transcriptional regulation of genes required for the development of pharyngeal muscles derived from the ABa lineage. Acts as a transcriptional repressor and binds to T-box binding sites in its own promoter to negatively autoregulate its own expression in neurons, seam cells and the gut in order to restrict its expression to certain tissues. May function together with the nfya-1-NF-Y complex to repress its own expression. Plays a role in neural fate specification in the hermaphrodite-specific neuron (HSN)/PHB neuron lineage, acting in concert with homeobox protein egl-5 and the asymmetric cell division protein ham-1. This chain is T-box protein 2, found in Caenorhabditis elegans.